The chain runs to 702 residues: Methionine--tRNA ligase (702 aa).

The 'HIGH' region motif lies at 14-24 (PYANGPVHLGH). Residues Cys146, Cys149, Cys159, and Cys162 each contribute to the Zn(2+) site. The 'KMSKS' region signature appears at 344–348 (KFSKS). ATP is bound at residue Lys347. In terms of domain architecture, tRNA-binding spans 601-702 (DFLKVDLRVA…GDEINGQQIQ (102 aa)).

It belongs to the class-I aminoacyl-tRNA synthetase family. MetG type 1 subfamily. Homodimer. Zn(2+) is required as a cofactor.

Its subcellular location is the cytoplasm. It carries out the reaction tRNA(Met) + L-methionine + ATP = L-methionyl-tRNA(Met) + AMP + diphosphate. Is required not only for elongation of protein synthesis but also for the initiation of all mRNA translation through initiator tRNA(fMet) aminoacylation. The chain is Methionine--tRNA ligase from Chlorobium limicola (strain DSM 245 / NBRC 103803 / 6330).